Reading from the N-terminus, the 122-residue chain is Large ribosomal subunit protein bL12 (122 aa).

The protein belongs to the bacterial ribosomal protein bL12 family. Homodimer. Part of the ribosomal stalk of the 50S ribosomal subunit. Forms a multimeric L10(L12)X complex, where L10 forms an elongated spine to which 2 to 4 L12 dimers bind in a sequential fashion. Binds GTP-bound translation factors.

Its function is as follows. Forms part of the ribosomal stalk which helps the ribosome interact with GTP-bound translation factors. Is thus essential for accurate translation. In Borrelia hermsii (strain HS1 / DAH), this protein is Large ribosomal subunit protein bL12.